A 590-amino-acid chain; its full sequence is Arginine--tRNA ligase (590 aa).

Positions 130–140 (ANPTGPMHVGH) match the 'HIGH' region motif.

This sequence belongs to the class-I aminoacyl-tRNA synthetase family. As to quaternary structure, monomer.

The protein localises to the cytoplasm. It catalyses the reaction tRNA(Arg) + L-arginine + ATP = L-arginyl-tRNA(Arg) + AMP + diphosphate. The protein is Arginine--tRNA ligase of Methylobacterium nodulans (strain LMG 21967 / CNCM I-2342 / ORS 2060).